Here is a 395-residue protein sequence, read N- to C-terminus: Elongation factor Tu (395 aa).

The tr-type G domain maps to 10-204; that stretch reads KPHVNIGTIG…AVDEYIPTPQ (195 aa). The G1 stretch occupies residues 19 to 26; the sequence is GHVDHGKT. GTP is bound at residue 19–26; it reads GHVDHGKT. A Mg(2+)-binding site is contributed by Thr26. Residues 60-64 are G2; that stretch reads GITIS. Residues 81 to 84 are G3; the sequence is DCPG. Residues 81–85 and 136–139 each bind GTP; these read DCPGH and NKCD. The interval 136–139 is G4; sequence NKCD. Residues 174–176 form a G5 region; that stretch reads SAL.

This sequence belongs to the TRAFAC class translation factor GTPase superfamily. Classic translation factor GTPase family. EF-Tu/EF-1A subfamily. As to quaternary structure, monomer.

It is found in the cytoplasm. It carries out the reaction GTP + H2O = GDP + phosphate + H(+). Functionally, GTP hydrolase that promotes the GTP-dependent binding of aminoacyl-tRNA to the A-site of ribosomes during protein biosynthesis. This Anoxybacillus flavithermus (strain DSM 21510 / WK1) protein is Elongation factor Tu.